Here is a 102-residue protein sequence, read N- to C-terminus: ATP-dependent Clp protease adapter protein ClpS (102 aa).

Belongs to the ClpS family. Binds to the N-terminal domain of the chaperone ClpA.

Involved in the modulation of the specificity of the ClpAP-mediated ATP-dependent protein degradation. The protein is ATP-dependent Clp protease adapter protein ClpS of Shewanella frigidimarina (strain NCIMB 400).